A 142-amino-acid chain; its full sequence is Large ribosomal subunit protein uL11 (142 aa).

Belongs to the universal ribosomal protein uL11 family. In terms of assembly, part of the ribosomal stalk of the 50S ribosomal subunit. Interacts with L10 and the large rRNA to form the base of the stalk. L10 forms an elongated spine to which L12 dimers bind in a sequential fashion forming a multimeric L10(L12)X complex. One or more lysine residues are methylated.

In terms of biological role, forms part of the ribosomal stalk which helps the ribosome interact with GTP-bound translation factors. The chain is Large ribosomal subunit protein uL11 from Gamma-proteobacterium EBAC31A08.